The following is a 586-amino-acid chain: Laccase-9 (586 aa).

A signal peptide spans 1 to 25; sequence MPRVHHSLSNQAFLVLLLFSSIASA. Plastocyanin-like domains are found at residues 33 to 149 and 159 to 307; these read HVKD…PRSG and KEVP…YEGA. Residues asparagine 52, asparagine 74, and asparagine 79 are each glycosylated (N-linked (GlcNAc...) asparagine). Residues histidine 83 and histidine 85 each contribute to the Cu cation site. N-linked (GlcNAc...) asparagine glycosylation is present at asparagine 111. Histidine 128 and histidine 130 together coordinate Cu cation. 5 N-linked (GlcNAc...) asparagine glycosylation sites follow: asparagine 236, asparagine 333, asparagine 385, asparagine 403, and asparagine 451. Residues 411-552 form the Plastocyanin-like 3 domain; that stretch reads DFPDQPPLKF…MMAFIVQNGP (142 aa). Cu cation contacts are provided by histidine 469, histidine 472, histidine 474, histidine 531, cysteine 532, histidine 533, and histidine 537.

It belongs to the multicopper oxidase family. It depends on Cu cation as a cofactor. Predominantly expressed in roots.

It is found in the secreted. Its subcellular location is the extracellular space. It localises to the apoplast. The catalysed reaction is 4 hydroquinone + O2 = 4 benzosemiquinone + 2 H2O. Lignin degradation and detoxification of lignin-derived products. This Arabidopsis thaliana (Mouse-ear cress) protein is Laccase-9 (LAC9).